A 473-amino-acid polypeptide reads, in one-letter code: Aspartyl/glutamyl-tRNA(Asn/Gln) amidotransferase subunit B (473 aa).

It belongs to the GatB/GatE family. GatB subfamily. Heterotrimer of A, B and C subunits.

The catalysed reaction is L-glutamyl-tRNA(Gln) + L-glutamine + ATP + H2O = L-glutaminyl-tRNA(Gln) + L-glutamate + ADP + phosphate + H(+). It catalyses the reaction L-aspartyl-tRNA(Asn) + L-glutamine + ATP + H2O = L-asparaginyl-tRNA(Asn) + L-glutamate + ADP + phosphate + 2 H(+). Functionally, allows the formation of correctly charged Asn-tRNA(Asn) or Gln-tRNA(Gln) through the transamidation of misacylated Asp-tRNA(Asn) or Glu-tRNA(Gln) in organisms which lack either or both of asparaginyl-tRNA or glutaminyl-tRNA synthetases. The reaction takes place in the presence of glutamine and ATP through an activated phospho-Asp-tRNA(Asn) or phospho-Glu-tRNA(Gln). The sequence is that of Aspartyl/glutamyl-tRNA(Asn/Gln) amidotransferase subunit B from Sulfurisphaera tokodaii (strain DSM 16993 / JCM 10545 / NBRC 100140 / 7) (Sulfolobus tokodaii).